A 352-amino-acid polypeptide reads, in one-letter code: Putative [LysW]-L-2-aminoadipate/[LysW]-L-glutamate phosphate reductase (352 aa).

NADP(+) contacts are provided by residues 10 to 13 (SGFT) and 34 to 36 (SRK). C151 is an active-site residue. N319 provides a ligand contact to NADP(+).

The protein belongs to the NAGSA dehydrogenase family. Type 1 subfamily. LysY sub-subfamily.

The protein resides in the cytoplasm. The enzyme catalyses [amino-group carrier protein]-C-terminal-N-(1-carboxy-5-oxopentan-1-yl)-L-glutamine + phosphate + NADP(+) = [amino-group carrier protein]-C-terminal-N-(1-carboxy-5-phosphooxy-5-oxopentan-1-yl)-L-glutamine + NADPH + H(+). It carries out the reaction [amino-group carrier protein]-C-terminal-gamma-(L-glutamyl-5-semialdehyde)-L-glutamate + phosphate + NADP(+) = [amino-group carrier protein]-C-terminal-gamma-(5-phospho-L-glutamyl)-L-glutamate + NADPH + H(+). Its pathway is amino-acid biosynthesis; L-lysine biosynthesis via AAA pathway; L-lysine from L-alpha-aminoadipate (Thermus route): step 3/5. It functions in the pathway amino-acid biosynthesis; L-arginine biosynthesis. Its function is as follows. Involved in both the arginine and lysine biosynthetic pathways. This is Putative [LysW]-L-2-aminoadipate/[LysW]-L-glutamate phosphate reductase from Pyrobaculum neutrophilum (strain DSM 2338 / JCM 9278 / NBRC 100436 / V24Sta) (Thermoproteus neutrophilus).